Reading from the N-terminus, the 743-residue chain is Acetyl-coenzyme A synthetase, chloroplastic/glyoxysomal (743 aa).

Residues 1 to 84 constitute a chloroplast transit peptide; that stretch reads MKIGSPSSPI…LNAVVLGESL (84 aa). Asp-613 is a catalytic residue.

This sequence belongs to the ATP-dependent AMP-binding enzyme family. As to expression, expressed in leaves, flower buds and young flowers.

The protein resides in the plastid. It is found in the chloroplast. It localises to the glyoxysome. The catalysed reaction is acetate + ATP + CoA = acetyl-CoA + AMP + diphosphate. Its function is as follows. Catalyzes the production of acetyl-CoA, an activated form of acetate that can be used for lipid synthesis or for energy generation. May play a limited role in the biosynthesis of lipids. This is Acetyl-coenzyme A synthetase, chloroplastic/glyoxysomal (ACS) from Arabidopsis thaliana (Mouse-ear cress).